A 257-amino-acid chain; its full sequence is Hydroxyacylglutathione hydrolase (257 aa).

Positions 54, 56, 58, 59, 113, 137, and 175 each coordinate Zn(2+).

This sequence belongs to the metallo-beta-lactamase superfamily. Glyoxalase II family. In terms of assembly, monomer. Zn(2+) is required as a cofactor.

The catalysed reaction is an S-(2-hydroxyacyl)glutathione + H2O = a 2-hydroxy carboxylate + glutathione + H(+). It functions in the pathway secondary metabolite metabolism; methylglyoxal degradation; (R)-lactate from methylglyoxal: step 2/2. Its function is as follows. Thiolesterase that catalyzes the hydrolysis of S-D-lactoyl-glutathione to form glutathione and D-lactic acid. This Nostoc sp. (strain PCC 7120 / SAG 25.82 / UTEX 2576) protein is Hydroxyacylglutathione hydrolase.